The following is a 610-amino-acid chain: Zinc metalloproteinase-disintegrin-like brevilysin H6 (610 aa).

Positions 1 to 20 are cleaved as a signal peptide; sequence MIQVLLVTICLAAFPYQGSS. The propeptide occupies 21–191; it reads IILESGNVND…ASQLNLTPEQ (171 aa). At Gln192 the chain carries Pyrrolidone carboxylic acid. One can recognise a Peptidase M12B domain in the interval 198-394; that stretch reads RFVELVLVAD…HNPECIVNEP (197 aa). Residues Glu201 and Asp285 each contribute to the Ca(2+) site. 4 cysteine pairs are disulfide-bonded: Cys309-Cys389, Cys349-Cys373, Cys351-Cys356, and Cys373-Cys378. His334 serves as a coordination point for Zn(2+). Glu335 is an active-site residue. Residues His338 and His344 each contribute to the Zn(2+) site. An N-linked (GlcNAc...) asparagine glycan is attached at Asn372. Residues Cys389, Asn392, Val404, Asn407, Leu409, Glu411, Glu414, and Asp417 each contribute to the Ca(2+) site. The 87-residue stretch at 402–488 folds into the Disintegrin domain; sequence PPVCGNELLE…ECPADVFHKN (87 aa). 22 disulfides stabilise this stretch: Cys405-Cys424, Cys405-Cys434, Cys416-Cys429, Cys416-Cys434, Cys418-Cys424, Cys428-Cys451, Cys442-Cys448, Cys447-Cys473, Cys460-Cys480, Cys467-Cys492, Cys467-Cys499, Cys492-Cys504, Cys499-Cys504, Cys511-Cys526, Cys511-Cys561, Cys526-Cys572, Cys539-Cys549, Cys549-Cys556, Cys556-Cys598, Cys561-Cys572, Cys592-Cys603, and Cys598-Cys603. The D/ECD-tripeptide signature appears at 466–468; sequence ECD. Ca(2+) contacts are provided by Asp468, Pro469, Glu471, Asp483, and Val484.

It belongs to the venom metalloproteinase (M12B) family. P-III subfamily. P-IIIb sub-subfamily. Monomer. The cofactor is Zn(2+). In terms of processing, in the absence of calcium ions, is autocatalytically degraded giving 29 (p29K) and 45 kDa (p45K) fragments. In presence of calcium ions, the p45K is not detected. Expressed by the venom gland.

Its subcellular location is the secreted. Its activity is regulated as follows. Inhibited by chelating agents. Calcium ions enhance its activity, they also suppress autoproteolysis, and contribute to the stability of the enzyme against pH, heating, urea and cysteine. In terms of biological role, shows weak hemorrhagic activity. Rapidly degrades the alpha-chain of fibrinogen (FGA). This is Zinc metalloproteinase-disintegrin-like brevilysin H6 from Gloydius brevicauda (Korean slamosa snake).